The sequence spans 312 residues: Ribose-phosphate pyrophosphokinase (312 aa).

Residues 34-36 (DLE) and 93-94 (RQ) contribute to the ATP site. 2 residues coordinate Mg(2+): histidine 127 and aspartate 168. Lysine 192 is a catalytic residue. D-ribose 5-phosphate contacts are provided by residues arginine 194, aspartate 218, and 222–226 (DSAGT).

It belongs to the ribose-phosphate pyrophosphokinase family. Class I subfamily. In terms of assembly, homohexamer. Mg(2+) is required as a cofactor.

The protein localises to the cytoplasm. The catalysed reaction is D-ribose 5-phosphate + ATP = 5-phospho-alpha-D-ribose 1-diphosphate + AMP + H(+). The protein operates within metabolic intermediate biosynthesis; 5-phospho-alpha-D-ribose 1-diphosphate biosynthesis; 5-phospho-alpha-D-ribose 1-diphosphate from D-ribose 5-phosphate (route I): step 1/1. In terms of biological role, involved in the biosynthesis of the central metabolite phospho-alpha-D-ribosyl-1-pyrophosphate (PRPP) via the transfer of pyrophosphoryl group from ATP to 1-hydroxyl of ribose-5-phosphate (Rib-5-P). This Caulobacter vibrioides (strain ATCC 19089 / CIP 103742 / CB 15) (Caulobacter crescentus) protein is Ribose-phosphate pyrophosphokinase.